We begin with the raw amino-acid sequence, 81 residues long: Putative membrane protein insertion efficiency factor (81 aa).

The interval 61 to 81 is disordered; the sequence is NDGGYDPVPPAPSSRTSSIAE.

The protein belongs to the UPF0161 family.

It localises to the cell inner membrane. In terms of biological role, could be involved in insertion of integral membrane proteins into the membrane. This chain is Putative membrane protein insertion efficiency factor, found in Pseudomonas putida (strain ATCC 47054 / DSM 6125 / CFBP 8728 / NCIMB 11950 / KT2440).